The following is a 356-amino-acid chain: uncharacterized protein (356 aa).

6 helical membrane-spanning segments follow: residues 7 to 29 (LLSRFLGIFLNVSFVSVLLVSLY), 49 to 71 (YFLNILPLGFYYISFITLSISLI), 91 to 113 (ISPLRFSLPVLLFSVFLSSTFLL), 270 to 292 (LFYRVMFSLSPVFISIFSLYLFF), 299 to 316 (QVIPRFLVFIVILWLVIL), and 329 to 348 (VLYSLIPIFLLILYSLKGVY).

The protein localises to the cell membrane. This is an uncharacterized protein from Aquifex aeolicus (strain VF5).